Consider the following 275-residue polypeptide: COP9 signalosome complex subunit 7a (275 aa).

Position 2 is an N-acetylserine (serine 2). The region spanning 2 to 159 (SAEVKVTGQN…QRLEVDYSIG (158 aa)) is the PCI domain. Positions 185-233 (LSGIEEQVSRANQHKEQQLGLKQQIESEVANLKKTIKVTTAAAAAATSQ) form a coiled coil. The tract at residues 228-275 (AAATSQDPEQHLTELREPASGTNQRQPSKKASKGKGLRGSAKIWSKSN) is disordered. Residues 235–244 (PEQHLTELRE) are compositionally biased toward basic and acidic residues. Over residues 254–263 (PSKKASKGKG) the composition is skewed to basic residues.

It belongs to the CSN7/EIF3M family. CSN7 subfamily. As to quaternary structure, component of the CSN complex, composed of COPS1/GPS1, COPS2, COPS3, COPS4, COPS5, COPS6, COPS7 (COPS7A or COPS7B), COPS8 and COPS9. In the complex, it probably interacts directly with COPS1, COPS2, COPS4, COPS5, COPS6 and COPS8. Interacts with PMF1. Interacts with the translation initiation factor EIF3S6. Interacts with CK2 and PKD. Interacts directly with ID3. Post-translationally, phosphorylated by CK2 and PKD kinases.

The protein localises to the cytoplasm. It localises to the nucleus. In terms of biological role, component of the COP9 signalosome complex (CSN), a complex involved in various cellular and developmental processes. The CSN complex is an essential regulator of the ubiquitin (Ubl) conjugation pathway by mediating the deneddylation of the cullin subunits of SCF-type E3 ligase complexes, leading to decrease the Ubl ligase activity of SCF-type complexes such as SCF, CSA or DDB2. The complex is also involved in phosphorylation of p53/TP53, JUN, I-kappa-B-alpha/NFKBIA, ITPK1 and IRF8/ICSBP, possibly via its association with CK2 and PKD kinases. CSN-dependent phosphorylation of TP53 and JUN promotes and protects degradation by the Ubl system, respectively. The chain is COP9 signalosome complex subunit 7a (Cops7a) from Mus musculus (Mouse).